A 685-amino-acid chain; its full sequence is ABC transporter G family member 26 (685 aa).

In terms of domain architecture, ABC transporter spans 65–329 (LKFEDVEYKV…FSSLRILPEI (265 aa)). 124 to 131 (GPSGSGKT) serves as a coordination point for ATP. In terms of domain architecture, ABC transmembrane type-2 spans 414–623 (DQFLILSRRT…GFRLLLKVQY (210 aa)). The next 6 membrane-spanning stretches (helical) occupy residues 432–452 (FDKLRLVQSLGVAVVLGLLWW), 468–488 (LMFYICIFWTSSSLFGAVYVF), 518–538 (MVAHVLYPTFFMIIVYFMAEF), 542–562 (IPCFLFTVLTILLIAITSQGA), 576–596 (AGMIASLVLMLFLLTGGYYVQ), and 648–668 (TINLNGGLQELWVLLAMAFGY).

It belongs to the ABC transporter superfamily. ABCG family. Eye pigment precursor importer (TC 3.A.1.204) subfamily. As to quaternary structure, homo- or heterodimer. As to expression, mostly expressed in flowers, especially in tapetum within anthers.

The protein resides in the cell membrane. It localises to the endoplasmic reticulum membrane. In terms of biological role, mediates the transport of sporopollenin precursors (e.g. polyketides) across the tapetum plasma membrane into the anther locule for polymerization on developing microspore walls, thus being required for male fertility and pollen exine formation and patterning prior to tapetum programmed cell death. In Arabidopsis thaliana (Mouse-ear cress), this protein is ABC transporter G family member 26.